We begin with the raw amino-acid sequence, 395 residues long: Transcription termination/antitermination protein NusA (395 aa).

An S1 motif domain is found at 137–201 (NSVLMGQVIL…TKKGLLLELS (65 aa)). KH domains are found at residues 243–291 (SHNA…TLAL) and 331–378 (KVRL…NESE).

This sequence belongs to the NusA family. Monomer. Binds directly to the core enzyme of the DNA-dependent RNA polymerase and to nascent RNA.

The protein resides in the cytoplasm. In terms of biological role, participates in both transcription termination and antitermination. The sequence is that of Transcription termination/antitermination protein NusA from Helicobacter pylori (strain ATCC 700392 / 26695) (Campylobacter pylori).